The chain runs to 519 residues: Glucoamylase GLU1 (519 aa).

The N-terminal stretch at 1 to 27 (MKFGVLFSVFAAIVSALPLQEGPLNKR) is a signal peptide. 2 N-linked (GlcNAc...) asparagine glycosylation sites follow: Asn115 and Asn127. Trp166 is a binding site for substrate. Asn205 carries N-linked (GlcNAc...) asparagine glycosylation. Asp234 serves as the catalytic Proton acceptor. The active-site Proton donor is Glu237.

It belongs to the glycosyl hydrolase 15 family.

It carries out the reaction Hydrolysis of terminal (1-&gt;4)-linked alpha-D-glucose residues successively from non-reducing ends of the chains with release of beta-D-glucose.. This Saccharomycopsis fibuligera (Yeast) protein is Glucoamylase GLU1 (GLU1).